A 150-amino-acid chain; its full sequence is UPF0102 protein sll0189 (150 aa).

It belongs to the UPF0102 family.

This is UPF0102 protein sll0189 from Synechocystis sp. (strain ATCC 27184 / PCC 6803 / Kazusa).